Here is a 199-residue protein sequence, read N- to C-terminus: MTKVKICGLSTKEAVETAVSAGADYIGFVFAPSKRQVTLEEAAELAKLIPADVKKVGVFVSPSRVELLEAIDKVGLDLVQVHGQVAADLFENLPCASIQAVQVDGNGHVPNSQADYLLFDAPVAGSGQSFDWGQLDTTGLAQPFFIAGGLNEDNVVKAIQHFTPYAVDVSSGVETDGQKDHEKIRRFIERVKHGISGTK.

It belongs to the TrpF family.

It catalyses the reaction N-(5-phospho-beta-D-ribosyl)anthranilate = 1-(2-carboxyphenylamino)-1-deoxy-D-ribulose 5-phosphate. The protein operates within amino-acid biosynthesis; L-tryptophan biosynthesis; L-tryptophan from chorismate: step 3/5. The chain is N-(5'-phosphoribosyl)anthranilate isomerase from Streptococcus pneumoniae (strain Taiwan19F-14).